The following is a 122-amino-acid chain: Protein 7a (122 aa).

A signal peptide spans 1–15 (MKIILFLTLIALASS). The X4e domain maps to 16-81 (ELYHYQECVR…RHTYQLRARS (66 aa)). At 16–96 (ELYHYQECVR…FTRQEEVHQE (81 aa)) the chain is on the virion surface side. 2 disulfides stabilise this stretch: cysteine 23/cysteine 58 and cysteine 35/cysteine 67. The chain crosses the membrane as a helical span at residues 97 to 117 (LYSPLFLIVAALVFIILCFTI). Residues 118 to 122 (KRKTE) are Intravirion-facing. Positions 118–122 (KRKTE) match the Di-lysine motif motif.

Interacts with the spike glycoprotein, M protein, E protein and the accessory protein 3.

The protein resides in the virion. It localises to the host endoplasmic reticulum membrane. Its subcellular location is the host endoplasmic reticulum-Golgi intermediate compartment membrane. The protein localises to the host Golgi apparatus membrane. Functionally, non-structural protein which is dispensable for virus replication in cell culture. This chain is Protein 7a, found in Rhinolophus macrotis (Big-eared horseshoe bat).